Reading from the N-terminus, the 426-residue chain is Enolase (426 aa).

Gln-163 contributes to the (2R)-2-phosphoglycerate binding site. Glu-205 acts as the Proton donor in catalysis. Asp-242, Glu-285, and Asp-312 together coordinate Mg(2+). Residues Lys-337, Arg-366, Ser-367, and Lys-388 each coordinate (2R)-2-phosphoglycerate. The active-site Proton acceptor is Lys-337.

Belongs to the enolase family. As to quaternary structure, component of the RNA degradosome, a multiprotein complex involved in RNA processing and mRNA degradation. Requires Mg(2+) as cofactor.

Its subcellular location is the cytoplasm. The protein localises to the secreted. The protein resides in the cell surface. It catalyses the reaction (2R)-2-phosphoglycerate = phosphoenolpyruvate + H2O. It functions in the pathway carbohydrate degradation; glycolysis; pyruvate from D-glyceraldehyde 3-phosphate: step 4/5. In terms of biological role, catalyzes the reversible conversion of 2-phosphoglycerate (2-PG) into phosphoenolpyruvate (PEP). It is essential for the degradation of carbohydrates via glycolysis. This Nitrosococcus oceani (strain ATCC 19707 / BCRC 17464 / JCM 30415 / NCIMB 11848 / C-107) protein is Enolase.